Consider the following 374-residue polypeptide: tRNA-specific 2-thiouridylase MnmA (374 aa).

ATP-binding positions include 10–17 and Leu-36; that span reads AMSGGVDS. The Nucleophile role is filled by Cys-111. A disulfide bond links Cys-111 and Cys-209. Gly-135 provides a ligand contact to ATP. Residues 159 to 161 are interaction with tRNA; the sequence is KDQ. Cys-209 serves as the catalytic Cysteine persulfide intermediate.

The protein belongs to the MnmA/TRMU family.

The protein localises to the cytoplasm. It carries out the reaction S-sulfanyl-L-cysteinyl-[protein] + uridine(34) in tRNA + AH2 + ATP = 2-thiouridine(34) in tRNA + L-cysteinyl-[protein] + A + AMP + diphosphate + H(+). In terms of biological role, catalyzes the 2-thiolation of uridine at the wobble position (U34) of tRNA, leading to the formation of s(2)U34. This chain is tRNA-specific 2-thiouridylase MnmA, found in Acidobacterium capsulatum (strain ATCC 51196 / DSM 11244 / BCRC 80197 / JCM 7670 / NBRC 15755 / NCIMB 13165 / 161).